We begin with the raw amino-acid sequence, 246 residues long: Alpha-tubulin N-acetyltransferase (246 aa).

The region spanning 21–202 is the N-acetyltransferase domain; it reads LTLVPDGVSR…NNFVVFHSFF (182 aa). Acetyl-CoA-binding positions include 135–148 and 172–181; these read FYVDESCQRQGYGK and SNKLLGFLRK.

Belongs to the acetyltransferase ATAT1 family.

It catalyses the reaction L-lysyl-[alpha-tubulin] + acetyl-CoA = N(6)-acetyl-L-lysyl-[alpha-tubulin] + CoA + H(+). Specifically acetylates 'Lys-40' in alpha-tubulin on the lumenal side of microtubules. Promotes microtubule destabilization and accelerates microtubule dynamics; this activity may be independent of acetylation activity. Acetylates alpha-tubulin with a slow enzymatic rate, due to a catalytic site that is not optimized for acetyl transfer. Enters the microtubule through each end and diffuses quickly throughout the lumen of microtubules. Acetylates only long/old microtubules because of its slow acetylation rate since it does not have time to act on dynamically unstable microtubules before the enzyme is released. The polypeptide is Alpha-tubulin N-acetyltransferase (Leishmania major).